Consider the following 632-residue polypeptide: Putative golgin subfamily A member 8I (632 aa).

Residues 1–77 are disordered; sequence MAEETQHNKL…SSATLKDLES (77 aa). A compositionally biased stretch (polar residues) spans 38-50; sequence TNGSIPQTATSGG. Coiled coils occupy residues 86-154 and 209-421; these read LDSR…HMKR and KLEQ…SLMA. A compositionally biased stretch (basic and acidic residues) spans 352-362; the sequence is KQEERIQEQHK. Disordered stretches follow at residues 352-383, 423-445, 496-524, and 550-569; these read KQEERIQEQHKSLQQLAKPQSVFEEPNNENKS, PGEGHGGEHLDSEGEEAPQPMPS, LSEPGGRAKDAALGGGHHQAGAQGGDEGE, and AHNPADEPGPGAPAPQELGA. Residues 508–520 are compositionally biased toward gly residues; that stretch reads LGGGHHQAGAQGG. Positions 529–632 are golgi-targeting domain; that stretch reads AADGIAAYSN…CWAWLPRRRR (104 aa). The span at 555–568 shows a compositional bias: low complexity; sequence DEPGPGAPAPQELG.

This sequence belongs to the GOLGA8 family.

It localises to the golgi apparatus. Its subcellular location is the golgi stack membrane. May be involved in maintaining Golgi structure. The protein is Putative golgin subfamily A member 8I of Homo sapiens (Human).